The primary structure comprises 435 residues: Kynurenine--oxoglutarate transaminase (435 aa).

2 residues coordinate substrate: Gly-46 and Asn-198. The residue at position 262 (Lys-262) is an N6-(pyridoxal phosphate)lysine. Arg-413 contacts substrate.

Belongs to the class-I pyridoxal-phosphate-dependent aminotransferase family. Homodimer. It depends on pyridoxal 5'-phosphate as a cofactor.

Its subcellular location is the cytoplasm. It carries out the reaction L-kynurenine + 2-oxoglutarate = kynurenate + L-glutamate + H2O. The catalysed reaction is 3-phenylpyruvate + L-glutamine = 2-oxoglutaramate + L-phenylalanine. The enzyme catalyses an S-substituted L-cysteine + H2O = a thiol + pyruvate + NH4(+). It participates in amino-acid degradation; L-kynurenine degradation; kynurenate from L-kynurenine: step 1/2. Its function is as follows. Catalyzes the irreversible transamination of the L-tryptophan metabolite L-kynurenine to form kynurenic acid (KA). Metabolizes the cysteine conjugates of certain halogenated alkenes and alkanes to form reactive metabolites. Catalyzes the beta-elimination of S-conjugates and Se-conjugates of L-(seleno)cysteine, resulting in the cleavage of the C-S or C-Se bond. In Dictyostelium discoideum (Social amoeba), this protein is Kynurenine--oxoglutarate transaminase (ccbl).